An 82-amino-acid chain; its full sequence is Diphthamide biosynthesis protein 3 (82 aa).

Residues 8-64 (IYDEVEIEDMTYDPALQTYSYPCPCGDKFEIALADLQDGQDIAVCPSCSLMVRVIFE) enclose the DPH-type MB domain. Residues C30, C32, C52, and C55 each contribute to the Fe cation site.

The protein belongs to the DPH3 family. Component of the 2-(3-amino-3-carboxypropyl)histidine synthase complex composed of dph-1, dph-2, dph-3 and a NADH-dependent reductase, predominantly cbr-1. Fe(2+) serves as cofactor.

The protein resides in the cytoplasm. Its subcellular location is the nucleus. It catalyses the reaction [3Fe-4S](1+)-[protein] + Fe(2+)-[Dph3] = [3Fe-4S](0)-[protein] + Fe(3+)-[Dph3]. It carries out the reaction 2 [3Fe-4S](0)-[protein] + 2 Fe(2+)-[Dph3] + NADH = 2 [4Fe-4S](1+)-[protein] + 2 [Dph3] + NAD(+) + H(+). Its pathway is protein modification; peptidyl-diphthamide biosynthesis. In terms of biological role, required for the first step of diphthamide biosynthesis, a post-translational modification of histidine which occurs in elongation factor 2. Dph-1 and dph-2 transfer a 3-amino-3-carboxypropyl (ACP) group from S-adenosyl-L-methionine (SAM) to a histidine residue, the reaction is assisted by a reduction system comprising dph-3 and a NADH-dependent reductase, predominantly cbr-1. Acts as an electron donor to reduce the Fe-S cluster in dph1-dph2 keeping the [4Fe-4S] clusters in the active and reduced state. Restores iron to dph-1-dph-2 iron-sulfur clusters which have degraded from [4Fe-4S] to [3Fe-4S] by donating an iron atom to reform [4Fe-4S] clusters, in a manner dependent on the presence of elongation factor 2 and SAM. Associates with the elongator complex and is required for tRNA Wobble base modifications mediated by the elongator complex. The elongator complex is required for multiple tRNA modifications, including mcm5U (5-methoxycarbonylmethyl uridine), mcm5s 2U (5-methoxycarbonylmethyl-2-thiouridine), and ncm5U (5-carbamoylmethyl uridine). The protein is Diphthamide biosynthesis protein 3 (dph-3) of Neurospora crassa (strain ATCC 24698 / 74-OR23-1A / CBS 708.71 / DSM 1257 / FGSC 987).